The following is a 137-amino-acid chain: ATP synthase epsilon chain (137 aa).

It belongs to the ATPase epsilon chain family. F-type ATPases have 2 components, CF(1) - the catalytic core - and CF(0) - the membrane proton channel. CF(1) has five subunits: alpha(3), beta(3), gamma(1), delta(1), epsilon(1). CF(0) has three main subunits: a, b and c.

It localises to the cell membrane. Functionally, produces ATP from ADP in the presence of a proton gradient across the membrane. The sequence is that of ATP synthase epsilon chain from Desulforudis audaxviator (strain MP104C).